The chain runs to 830 residues: MDEFSFPFQPYDIQLNLMREIRQCIEQRKIGIFESPTGTGKSLSVLCSTMTWLEAEELRISTDLSTRLGEVHTKITECDKITTADNWETAVREKMRAQDVETEILEQIQSRERLQSRIDQARRGMVEVSRKRKAPARDTDQFLEPQDEAAPSEEYNNDEKSEKQRDSDFFDDVDEEEEKPLKCLKIFYASRTHSQLEQLAEELAKTRFQPRIVTCASRGTLCVNEEVKKLKLNHLINEKCMELRKNGMSEKEKVQKLEKGTTKKTKTCATSCEFYNSTQIEDVVNGVLSNKLKSTLEVSKQGKLSNGCPYFATRKSVPQCQLVLLPYQVLLHDGTRKAWGIELKDNVIVLDEAHNVLNTISSLYSAEISTKSLTLALRLIREYNAHYKLKLLAHNLLYMKQLESLTSKMLIFLNSQSKEDVMTMAQLARNLNILEINLFKLAEYMEKTDLCKKFHGFYMRLQKEEIKKENEKPKLTGIQKLMAAKEAEPEPEAEPLPPPKPVPSPLFSLKSFIDALTNKCEDGRIIVEKSATEAKFRFMLLNPADRLSEVVTSARATILVGGTMEPAQLLVETLSRGSIGADSIRRFSCCHVIDDSQLLAVTVERTVDGKPFQLTYQTRGADTTLRSLATSIQALIPHIPNGVVIFVPSYDFLFNFQKKMKEFGILKRIEEKKAVFTESRQPTSDVWDRFSRAAKTSKGAILFAVVGGKMSEGINFCDELGRAVIVIGLPYPNKTSVELRERMKFLDTQMPNGGNLLYESLCMHAVNQAIGRAIRHRRDYAAVYLFDDRYAKESTRRKLSTWIGDRTQVKLGFGEIIRKTRSFFEANSKK.

Residues 1–403 (MDEFSFPFQP…HNLLYMKQLE (403 aa)) form the Helicase ATP-binding domain. An ATP-binding site is contributed by 35 to 42 (SPTGTGKS). 2 stretches are compositionally biased toward basic and acidic residues: residues 124–140 (GMVE…RDTD) and 157–168 (NDEKSEKQRDSD). The segment at 124–173 (GMVEVSRKRKAPARDTDQFLEPQDEAAPSEEYNNDEKSEKQRDSDFFDDV) is disordered. Positions 222, 240, 272, and 308 each coordinate [4Fe-4S] cluster. Positions 351 to 354 (DEAH) match the DEAH box motif.

It belongs to the DEAD box helicase family. DEAH subfamily. DDX11/CHL1 sub-subfamily. The cofactor is [4Fe-4S] cluster.

The protein localises to the nucleus. The catalysed reaction is Couples ATP hydrolysis with the unwinding of duplex DNA at the replication fork by translocating in the 5'-3' direction. This creates two antiparallel DNA single strands (ssDNA). The leading ssDNA polymer is the template for DNA polymerase III holoenzyme which synthesizes a continuous strand.. It carries out the reaction ATP + H2O = ADP + phosphate + H(+). Functionally, required for normal cell proliferation and chromosome stability. Plays a role in DNA repair during replication. The protein is ATP-dependent DNA helicase chl-1 of Caenorhabditis elegans.